A 243-amino-acid polypeptide reads, in one-letter code: ATP synthase subunit a (243 aa).

A run of 7 helical transmembrane segments spans residues 29–49, 54–74, 89–109, 114–134, 144–164, 182–202, and 208–228; these read NASL…YIGL, ILPN…VSTI, VFTI…PLGF, HIAV…AIGF, ILLP…IELF, IAGH…NIFL, and AFII…AYIF.

It belongs to the ATPase A chain family. In terms of assembly, F-type ATPases have 2 components, CF(1) - the catalytic core - and CF(0) - the membrane proton channel. CF(1) has five subunits: alpha(3), beta(3), gamma(1), delta(1), epsilon(1). CF(0) has three main subunits: a(1), b(2) and c(9-12). The alpha and beta chains form an alternating ring which encloses part of the gamma chain. CF(1) is attached to CF(0) by a central stalk formed by the gamma and epsilon chains, while a peripheral stalk is formed by the delta and b chains.

It is found in the cell inner membrane. Functionally, key component of the proton channel; it plays a direct role in the translocation of protons across the membrane. This is ATP synthase subunit a from Ehrlichia chaffeensis (strain ATCC CRL-10679 / Arkansas).